The sequence spans 89 residues: LSM complex subunit LSM3 (89 aa).

Residues 3–82 enclose the Sm domain; that stretch reads TPLDLLKLNL…VTLISTPSED (80 aa).

This sequence belongs to the snRNP Sm proteins family. As to quaternary structure, component of the heptameric LSM1-LSM7 complex that forms a seven-membered ring structure with a donut shape. The LSm subunits are arranged in the order LSM1, LSM2, LSM3, LSM6, LSM5, LSM7 and LSM4. Except for LSM1, where a C-terminal helix crosses the ring structure to form additional interactions with LSM3 and LSM6, each subunit interacts only with its two neighboring subunits. The LSM1-LSM7 complex interacts with PAT1; within the complex PAT1 has direct interactions with LSM2 and LSM3. The LSM1-LSM7 complex interacts with XRN1. Component of the heptameric LSM2-LSM8 complex that forms a seven-membered ring structure with a donut shape; an RNA strand can pass through the hole in the center of the ring structure. The LSm subunits are arranged in the order LSM8, LSM2, LSM3, LSM6, LSM5, LSM7 and LSM4. Component of the spliceosome U4/U6-U5 tri-snRNP complex composed of the U4, U6 and U5 snRNAs and at least PRP3, PRP4, PRP6, PRP8, PRP18, PRP31, PRP38, SNU13, SNU23, SNU66, SNU114, SPP381, SMB1, SMD1, SMD2, SMD3, SMX2, SMX3, LSM2, LSM3, LSM4, LSM5, LSM6, LSM7, LSM8, BRR2 and DIB1. May be found in a complex comprising LSM2-LSM7 without LSM1 or LSM8; the complex associates with pre-P RNA and snoRNA SNR5.

It is found in the nucleus. It localises to the nucleolus. The protein resides in the cytoplasm. Functionally, component of LSm protein complexes, which are involved in RNA processing and may function in a chaperone-like manner. Component of the cytoplasmic LSM1-LSM7 complex which is involved in mRNA degradation by activating the decapping step. Together with PAT1, the LSM1-LSM7 complex binds to osmotic stress-activated mRNAs to attenuate the osmotic stress response, probably by limiting ribosome access to the mRNA and consequently translation. Component of the nuclear LSM2-LSM8 complex, which is involved in spliceosome assembly. The LSM2-LSM8 complex plays a role in the biogenesis of the spliceosomal U4/U6-U5 tri-snRNP complex by accelerating PRP24-mediated annealing of U4/U6 di-snRNA. The LSM2-LSM8 complex binds U6 snRNA terminating with a non-cyclic 3' phosphate group. LSM2-LSM8 is probably also involved in degradation of nuclear pre-mRNA by targeting them for decapping. LSM2-LSM8 could be involved in processing of pre-tRNAs, pre-rRNAs and U3 snoRNA, although involvement may be indirect. In a complex that probably contains LSM2-LSM7, but not LSM1 or LSM8, associates with the precursor of the RNA component of RNase P (pre-P RNA) and may be involved in maturing pre-P RNA; the complex also associates with snoRNA SNR5. This chain is LSM complex subunit LSM3 (LSM3), found in Saccharomyces cerevisiae (strain ATCC 204508 / S288c) (Baker's yeast).